Reading from the N-terminus, the 567-residue chain is Platelet glycoprotein V (567 aa).

Positions 1–16 (MLRSALLSAVLPLLRA) are cleaved as a signal peptide. One can recognise an LRRNT domain in the interval 17-50 (QPFPCPKTCKCVVRDAAQCSGGSVAHIAELGLPT). At 17 to 522 (QPFPCPKTCK…ESPNNRLYWG (506 aa)) the chain is on the extracellular side. N-linked (GlcNAc...) asparagine glycosylation is found at Asn-51 and Asn-67. LRR repeat units lie at residues 75 to 96 (VLQR…TFND), 99 to 120 (KLKT…ILDK), 123 to 144 (LLEQ…LFQQ), 147 to 168 (NLQE…LFSS), 171 to 193 (ELKL…LGAQ), 195 to 216 (KLEK…LLSN), 219 to 240 (ALTE…AFDR), 243 to 264 (NLSS…LFLH), 267 to 288 (SVSR…LFGE), 291 to 312 (GLRE…AFRN), 315 to 337 (GLQT…VFQG), 340 to 361 (ELRV…ALRG), 364 to 385 (HLRQ…LFRN), and 388 to 409 (SLES…VFAA). The N-linked (GlcNAc...) asparagine glycan is linked to Asn-181. Asn-243 is a glycosylation site (N-linked (GlcNAc...) asparagine). N-linked (GlcNAc...) asparagine glycans are attached at residues Asn-298 and Asn-312. A glycan (N-linked (GlcNAc...) asparagine) is linked at Asn-385. The 54-residue stretch at 421–474 (NPWLCDCGLWRFLQWLRHHPDILGRDEPPQCRGPEPRASLSFWELLQGDPWCPD) folds into the LRRCT domain. A helical membrane pass occupies residues 523–543 (LYILLLVAQAIIAAFIVFAMI). Over 544 to 567 (KIGQLFRTLIREKLLLEAMGKSCN) the chain is Cytoplasmic.

Its subcellular location is the membrane. The GPIb-V-IX complex functions as the vWF receptor and mediates vWF-dependent platelet adhesion to blood vessels. The adhesion of platelets to injured vascular surfaces in the arterial circulation is a critical initiating event in hemostasis. This chain is Platelet glycoprotein V (Gp5), found in Mus musculus (Mouse).